The primary structure comprises 260 residues: Pyridoxine 5'-phosphate synthase (260 aa).

Residue N15 coordinates 3-amino-2-oxopropyl phosphate. 17–18 (DH) serves as a coordination point for 1-deoxy-D-xylulose 5-phosphate. R26 provides a ligand contact to 3-amino-2-oxopropyl phosphate. H51 (proton acceptor) is an active-site residue. 1-deoxy-D-xylulose 5-phosphate is bound by residues R53 and H58. Catalysis depends on E78, which acts as the Proton acceptor. T108 provides a ligand contact to 1-deoxy-D-xylulose 5-phosphate. H199 acts as the Proton donor in catalysis. 3-amino-2-oxopropyl phosphate-binding positions include G200 and 221 to 222 (GH).

Belongs to the PNP synthase family. In terms of assembly, homooctamer; tetramer of dimers.

The protein resides in the cytoplasm. The catalysed reaction is 3-amino-2-oxopropyl phosphate + 1-deoxy-D-xylulose 5-phosphate = pyridoxine 5'-phosphate + phosphate + 2 H2O + H(+). It participates in cofactor biosynthesis; pyridoxine 5'-phosphate biosynthesis; pyridoxine 5'-phosphate from D-erythrose 4-phosphate: step 5/5. Its function is as follows. Catalyzes the complicated ring closure reaction between the two acyclic compounds 1-deoxy-D-xylulose-5-phosphate (DXP) and 3-amino-2-oxopropyl phosphate (1-amino-acetone-3-phosphate or AAP) to form pyridoxine 5'-phosphate (PNP) and inorganic phosphate. The polypeptide is Pyridoxine 5'-phosphate synthase (Cupriavidus metallidurans (strain ATCC 43123 / DSM 2839 / NBRC 102507 / CH34) (Ralstonia metallidurans)).